Consider the following 259-residue polypeptide: MQTIAIQGRDLCVTYGSRQVLDHVDITLRCGEVAALLGPNGAGKSTLLKLLCGEMSGAGKLDYFGVPASQWPAEKLANHLGILPQQSSLTFPFTAQEVVELGAIPLNLPRKEVERVARHYMLKTDVLHLAASLYPSLSGGEKQRLHLARVLTQLHQAGQQRILMLDEPTSALDLAHQHNTLQLARQLADEEQCAVVVVLHDLNLAAQYSDRLILLHQGKIVCDAAPWQALTAERIEQVYGYQALVAAHPTRDFPMVYPA.

An ABC transporter domain is found at 6 to 242 (IQGRDLCVTY…ERIEQVYGYQ (237 aa)). 38 to 45 (GPNGAGKS) contacts ATP.

It belongs to the ABC transporter superfamily. Heme (hemin) importer (TC 3.A.1.14.5) family. In terms of assembly, the complex is composed of two ATP-binding proteins (HmuV), two transmembrane proteins (HmuU) and a solute-binding protein (HmuT).

It localises to the cell inner membrane. Its function is as follows. Part of the ABC transporter complex HmuTUV involved in hemin import. Responsible for energy coupling to the transport system. The chain is Hemin import ATP-binding protein HmuV from Vibrio cholerae serotype O1 (strain ATCC 39315 / El Tor Inaba N16961).